Consider the following 195-residue polypeptide: dTTP/UTP pyrophosphatase (195 aa).

Aspartate 70 (proton acceptor) is an active-site residue.

The protein belongs to the Maf family. YhdE subfamily. Requires a divalent metal cation as cofactor.

Its subcellular location is the cytoplasm. The catalysed reaction is dTTP + H2O = dTMP + diphosphate + H(+). The enzyme catalyses UTP + H2O = UMP + diphosphate + H(+). Its function is as follows. Nucleoside triphosphate pyrophosphatase that hydrolyzes dTTP and UTP. May have a dual role in cell division arrest and in preventing the incorporation of modified nucleotides into cellular nucleic acids. This Methanococcoides burtonii (strain DSM 6242 / NBRC 107633 / OCM 468 / ACE-M) protein is dTTP/UTP pyrophosphatase.